The primary structure comprises 154 residues: Endoribonuclease YbeY (154 aa).

Residues histidine 113, histidine 117, and histidine 123 each contribute to the Zn(2+) site.

The protein belongs to the endoribonuclease YbeY family. Zn(2+) is required as a cofactor.

The protein localises to the cytoplasm. In terms of biological role, single strand-specific metallo-endoribonuclease involved in late-stage 70S ribosome quality control and in maturation of the 3' terminus of the 16S rRNA. In Vibrio campbellii (strain ATCC BAA-1116), this protein is Endoribonuclease YbeY.